Here is a 195-residue protein sequence, read N- to C-terminus: Large ribosomal subunit protein eL6 (195 aa).

Residues Ser-105 and Ser-115 each carry the phosphoserine modification.

This sequence belongs to the eukaryotic ribosomal protein eL6 family. Component of the large ribosomal subunit (LSU). Mature yeast ribosomes consist of a small (40S) and a large (60S) subunit. The 40S small subunit contains 1 molecule of ribosomal RNA (18S rRNA) and at least 33 different proteins. The large 60S subunit contains 3 rRNA molecules (25S, 5.8S and 5S rRNA) and at least 46 different proteins.

It localises to the cytoplasm. The protein resides in the nucleus. Its subcellular location is the nucleolus. Its function is as follows. Component of the ribosome, a large ribonucleoprotein complex responsible for the synthesis of proteins in the cell. The small ribosomal subunit (SSU) binds messenger RNAs (mRNAs) and translates the encoded message by selecting cognate aminoacyl-transfer RNA (tRNA) molecules. The large subunit (LSU) contains the ribosomal catalytic site termed the peptidyl transferase center (PTC), which catalyzes the formation of peptide bonds, thereby polymerizing the amino acids delivered by tRNAs into a polypeptide chain. The nascent polypeptides leave the ribosome through a tunnel in the LSU and interact with protein factors that function in enzymatic processing, targeting, and the membrane insertion of nascent chains at the exit of the ribosomal tunnel. This chain is Large ribosomal subunit protein eL6 (rpl6), found in Schizosaccharomyces pombe (strain 972 / ATCC 24843) (Fission yeast).